Here is a 456-residue protein sequence, read N- to C-terminus: Glycerol-3-phosphate acyltransferase 4 (456 aa).

A signal peptide spans 1–37 (MFLLLPFDSLIVNLLGISLTVLFTLLLVFIIVPAIFG). A run of 2 helical transmembrane segments spans residues 156 to 176 (ISLRLTVLWGLGVLIRYCFLL) and 180 to 200 (IALAFTGISLLVVGTTVVGYL). Asn-247 carries N-linked (GlcNAc...) asparagine glycosylation. Residues 248-253 (HTSPID) carry the HXXXXD motif motif. Residues Asn-327, Asn-328, and Asn-362 are each glycosylated (N-linked (GlcNAc...) asparagine).

This sequence belongs to the 1-acyl-sn-glycerol-3-phosphate acyltransferase family. In terms of tissue distribution, ubiquitous. High levels in testis. Relatively high level of expression in skeletal muscle and heart. Relatively low level of expression in lung.

It is found in the endoplasmic reticulum membrane. The catalysed reaction is sn-glycerol 3-phosphate + an acyl-CoA = a 1-acyl-sn-glycero-3-phosphate + CoA. It carries out the reaction dodecanoyl-CoA + sn-glycerol 3-phosphate = 1-dodecanoyl-sn-glycerol 3-phosphate + CoA. The enzyme catalyses sn-glycerol 3-phosphate + hexadecanoyl-CoA = 1-hexadecanoyl-sn-glycero-3-phosphate + CoA. It catalyses the reaction sn-glycerol 3-phosphate + octadecanoyl-CoA = 1-octadecanoyl-sn-glycero-3-phosphate + CoA. The catalysed reaction is sn-glycerol 3-phosphate + (9Z)-octadecenoyl-CoA = 1-(9Z-octadecenoyl)-sn-glycero-3-phosphate + CoA. It carries out the reaction (9Z,12Z)-octadecadienoyl-CoA + sn-glycerol 3-phosphate = 1-(9Z,12Z)-octadecadienoyl-sn-glycero-3-phosphate + CoA. It functions in the pathway phospholipid metabolism; CDP-diacylglycerol biosynthesis; CDP-diacylglycerol from sn-glycerol 3-phosphate: step 1/3. Inhibited by N-ethylmaleimide (NEM). Converts glycerol-3-phosphate to 1-acyl-sn-glycerol-3-phosphate (lysophosphatidic acid or LPA) by incorporating an acyl moiety at the sn-1 position of the glycerol backbone. Active against both saturated and unsaturated long-chain fatty acyl-CoAs. Protects cells against lipotoxicity. This chain is Glycerol-3-phosphate acyltransferase 4, found in Homo sapiens (Human).